An 81-amino-acid chain; its full sequence is Dermaseptin-B7 (81 aa).

A signal peptide spans 1 to 22 (MASLKKSLFLVLFLGLVSLSIC). Positions 23 to 44 (EEEKRENEDEEEQEDDEQSEMK) are excised as a propeptide. Residues 24-48 (EEKRENEDEEEQEDDEQSEMKRGLW) form a disordered region. Positions 30–40 (EDEEEQEDDEQ) are enriched in acidic residues. Position 78 is a valine amide (Val78). The propeptide occupies 80 to 81 (EQ).

This sequence belongs to the frog skin active peptide (FSAP) family. Dermaseptin subfamily. As to expression, expressed by the skin glands.

The protein resides in the secreted. Functionally, has antimicrobial activity. The sequence is that of Dermaseptin-B7 (DRG1) from Phyllomedusa bicolor (Two-colored leaf frog).